A 158-amino-acid polypeptide reads, in one-letter code: NAD(P)H-quinone oxidoreductase subunit J, chloroplastic (158 aa).

This sequence belongs to the complex I 30 kDa subunit family. NDH is composed of at least 16 different subunits, 5 of which are encoded in the nucleus.

It is found in the plastid. The protein localises to the chloroplast thylakoid membrane. The enzyme catalyses a plastoquinone + NADH + (n+1) H(+)(in) = a plastoquinol + NAD(+) + n H(+)(out). It carries out the reaction a plastoquinone + NADPH + (n+1) H(+)(in) = a plastoquinol + NADP(+) + n H(+)(out). Its function is as follows. NDH shuttles electrons from NAD(P)H:plastoquinone, via FMN and iron-sulfur (Fe-S) centers, to quinones in the photosynthetic chain and possibly in a chloroplast respiratory chain. The immediate electron acceptor for the enzyme in this species is believed to be plastoquinone. Couples the redox reaction to proton translocation, and thus conserves the redox energy in a proton gradient. This chain is NAD(P)H-quinone oxidoreductase subunit J, chloroplastic, found in Daucus carota (Wild carrot).